Here is a 905-residue protein sequence, read N- to C-terminus: MTNQIPSASSAADFGSSKSTSVDAVPNMDKSSSVRRKNIDSNGLQQTNQIEQAESSLNAEADHSEPERYGCTPSGKVFLLPKEQENRRSILETVDPRFSKTPWDWIVISSILAQVLLFFMTTGAVRRYSMMLCFFFWRISYDAGIGFLLHMQSNHRKVVTWISDFGFFDKENHPKLYDLTKKQLISKMDSSYNYDTSPLEFNSWLVFRHFVDLILMCDFCSYILMGLAWTCWPKVNIILQFLRIFGGIALIVFNYWVKMDAHRVVRDYAWYWGDFFFLLRSSLVFNGVFELAPHPMYSVGYAGYYGMSLLTGSYAVLFASILAHAAQFGFLLFVENPHIERTYGTDINHARLSPRGEDNEFELPPEHDLVGFVNFDFTRISDVALLIIALYSIFIILLSSNSHYSQFWAIFQAFVWRFLHSIIHAFILFYQSKSKAWTKHFIRNGESAAYAWSQWKGLYNLTLNMSYISFVMAAWKLYHLPSNWTYGLVSLRHALGFGLIALHIYTSVSIYEDLGQYGWFYGDFFLPSRSPKLVYQGIYRYVNNPERFLGCSAYWGLALISSSAWIFLIAILAQLSNLAIIRLVEQPHMQKVYGNTLRKEAGISKLIKQATSEKGNILPKTVETHMKALTTSVDKVLDQTAEALEEFVNTAPPKVQELLKGTESNLRKNAQLAILKLFAPQLSSSTHFDYKLEIKGIDNNQVLLGHPITVCWTASPNHEINDWIGLYKLSDNASDLYTQTSSEGRWSAIDANGYTSHCSSIKSLSNDKNSGEVEFSGDLLFWETGTFEFRYHYGGKHLVMAKTEPFVITATSMNTTDVDEVSAYLLKSIKFCDPNITPHDGDASLCDISEGSARKLTSIIKYSFGIDLSYRVVQVDGSCSALSRRIVNSLKILQSFDGPSGAKDD.

Composition is skewed to polar residues over residues 1 to 22 and 40 to 58; these read MTNQ…STSV and DSNG…SSLN. The segment at 1 to 73 is disordered; the sequence is MTNQIPSASS…SEPERYGCTP (73 aa). Residues 1–104 are Lumenal-facing; that stretch reads MTNQIPSASS…DPRFSKTPWD (104 aa). The helical transmembrane segment at 105 to 125 threads the bilayer; sequence WIVISSILAQVLLFFMTTGAV. Residues 126-128 are Cytoplasmic-facing; sequence RRY. The helical transmembrane segment at 129–149 threads the bilayer; it reads SMMLCFFFWRISYDAGIGFLL. Residues 150-209 are Lumenal-facing; it reads HMQSNHRKVVTWISDFGFFDKENHPKLYDLTKKQLISKMDSSYNYDTSPLEFNSWLVFRH. A helical membrane pass occupies residues 210–230; the sequence is FVDLILMCDFCSYILMGLAWT. Over 231–236 the chain is Cytoplasmic; sequence CWPKVN. The chain crosses the membrane as a helical span at residues 237 to 257; it reads IILQFLRIFGGIALIVFNYWV. At 258–268 the chain is on the lumenal side; sequence KMDAHRVVRDY. Residues 269–289 traverse the membrane as a helical segment; the sequence is AWYWGDFFFLLRSSLVFNGVF. Over 290 to 313 the chain is Cytoplasmic; it reads ELAPHPMYSVGYAGYYGMSLLTGS. A helical transmembrane segment spans residues 314–334; it reads YAVLFASILAHAAQFGFLLFV. The Lumenal segment spans residues 335–379; sequence ENPHIERTYGTDINHARLSPRGEDNEFELPPEHDLVGFVNFDFTR. Ser-353 bears the Phosphoserine mark. A helical membrane pass occupies residues 380-400; that stretch reads ISDVALLIIALYSIFIILLSS. Over 401 to 408 the chain is Cytoplasmic; the sequence is NSHYSQFW. The helical transmembrane segment at 409–429 threads the bilayer; the sequence is AIFQAFVWRFLHSIIHAFILF. The Lumenal segment spans residues 430 to 456; sequence YQSKSKAWTKHFIRNGESAAYAWSQWK. The helical transmembrane segment at 457-479 threads the bilayer; sequence GLYNLTLNMSYISFVMAAWKLYH. The Cytoplasmic segment spans residues 480–493; it reads LPSNWTYGLVSLRH. Residues 494–514 form a helical membrane-spanning segment; sequence ALGFGLIALHIYTSVSIYEDL. The Lumenal segment spans residues 515–552; the sequence is GQYGWFYGDFFLPSRSPKLVYQGIYRYVNNPERFLGCS. The chain crosses the membrane as a helical span at residues 553–573; that stretch reads AYWGLALISSSAWIFLIAILA. Over 574 to 905 the chain is Cytoplasmic; the sequence is QLSNLAIIRL…FDGPSGAKDD (332 aa).

This sequence belongs to the class VI-like SAM-binding methyltransferase superfamily. CHO2 family.

The protein resides in the endoplasmic reticulum membrane. The catalysed reaction is a 1,2-diacyl-sn-glycero-3-phosphoethanolamine + S-adenosyl-L-methionine = a 1,2-diacyl-sn-glycero-3-phospho-N-methylethanolamine + S-adenosyl-L-homocysteine + H(+). The protein operates within phospholipid metabolism; phosphatidylcholine biosynthesis. Catalyzes the first step of the methylation pathway of phosphatidylcholine biosynthesis, the SAM-dependent methylation of phosphatidylethanolamine (PE) to phosphatidylmonomethylethanolamine (PMME). In Schizosaccharomyces pombe (strain 972 / ATCC 24843) (Fission yeast), this protein is Phosphatidylethanolamine N-methyltransferase.